A 112-amino-acid polypeptide reads, in one-letter code: LXAINDMDVAXNLMKVLNAVMRDPSLYRMXSLEAAMLNSFYATSYKPTFIDDXIMEQMMAFIDDDPLEQMRAERVVMYXTQPFIDAVVMYHNQLFIDAKSXLDSTRSYXXGG.

Binds annexin.

The polypeptide is 87 kDa annexin-binding protein (Physarum polycephalum (Slime mold)).